The following is a 238-amino-acid chain: 1-(5-phosphoribosyl)-5-[(5-phosphoribosylamino)methylideneamino] imidazole-4-carboxamide isomerase (238 aa).

Catalysis depends on Asp8, which acts as the Proton acceptor. Asp129 (proton donor) is an active-site residue.

The protein belongs to the HisA/HisF family.

Its subcellular location is the cytoplasm. It catalyses the reaction 1-(5-phospho-beta-D-ribosyl)-5-[(5-phospho-beta-D-ribosylamino)methylideneamino]imidazole-4-carboxamide = 5-[(5-phospho-1-deoxy-D-ribulos-1-ylimino)methylamino]-1-(5-phospho-beta-D-ribosyl)imidazole-4-carboxamide. The protein operates within amino-acid biosynthesis; L-histidine biosynthesis; L-histidine from 5-phospho-alpha-D-ribose 1-diphosphate: step 4/9. The polypeptide is 1-(5-phosphoribosyl)-5-[(5-phosphoribosylamino)methylideneamino] imidazole-4-carboxamide isomerase (Anaeromyxobacter dehalogenans (strain 2CP-C)).